The sequence spans 381 residues: Acetylornithine deacetylase (381 aa).

Residue His79 participates in Zn(2+) binding. Residue Asp81 is part of the active site. Asp111 contacts Zn(2+). Glu143 is a catalytic residue. Zn(2+)-binding residues include Glu144, Glu168, and His354.

Belongs to the peptidase M20A family. ArgE subfamily. As to quaternary structure, homodimer. The cofactor is Zn(2+). Requires Co(2+) as cofactor. Glutathione is required as a cofactor.

It is found in the cytoplasm. The catalysed reaction is N(2)-acetyl-L-ornithine + H2O = L-ornithine + acetate. It participates in amino-acid biosynthesis; L-arginine biosynthesis; L-ornithine from N(2)-acetyl-L-ornithine (linear): step 1/1. In terms of biological role, catalyzes the hydrolysis of the amide bond of N(2)-acetylated L-amino acids. Cleaves the acetyl group from N-acetyl-L-ornithine to form L-ornithine, an intermediate in L-arginine biosynthesis pathway, and a branchpoint in the synthesis of polyamines. The sequence is that of Acetylornithine deacetylase from Buchnera aphidicola subsp. Acyrthosiphon pisum (strain 5A).